The primary structure comprises 424 residues: Serine--tRNA ligase (424 aa).

230 to 232 (TAE) lines the L-serine pocket. An ATP-binding site is contributed by 261-263 (RSE). Residue Glu-284 participates in L-serine binding. ATP is bound at residue 348 to 351 (EISS). Ser-384 contacts L-serine.

This sequence belongs to the class-II aminoacyl-tRNA synthetase family. Type-1 seryl-tRNA synthetase subfamily. As to quaternary structure, homodimer. The tRNA molecule binds across the dimer.

The protein localises to the cytoplasm. It carries out the reaction tRNA(Ser) + L-serine + ATP = L-seryl-tRNA(Ser) + AMP + diphosphate + H(+). The catalysed reaction is tRNA(Sec) + L-serine + ATP = L-seryl-tRNA(Sec) + AMP + diphosphate + H(+). It participates in aminoacyl-tRNA biosynthesis; selenocysteinyl-tRNA(Sec) biosynthesis; L-seryl-tRNA(Sec) from L-serine and tRNA(Sec): step 1/1. Catalyzes the attachment of serine to tRNA(Ser). Is also able to aminoacylate tRNA(Sec) with serine, to form the misacylated tRNA L-seryl-tRNA(Sec), which will be further converted into selenocysteinyl-tRNA(Sec). The protein is Serine--tRNA ligase of Streptococcus pneumoniae serotype 2 (strain D39 / NCTC 7466).